The sequence spans 149 residues: Large ribosomal subunit protein uL11 (149 aa).

Belongs to the universal ribosomal protein uL11 family. As to quaternary structure, part of the ribosomal stalk of the 50S ribosomal subunit. Interacts with L10 and the large rRNA to form the base of the stalk. L10 forms an elongated spine to which L12 dimers bind in a sequential fashion forming a multimeric L10(L12)X complex. One or more lysine residues are methylated.

Forms part of the ribosomal stalk which helps the ribosome interact with GTP-bound translation factors. The protein is Large ribosomal subunit protein uL11 of Methylorubrum extorquens (strain CM4 / NCIMB 13688) (Methylobacterium extorquens).